The primary structure comprises 807 residues: Glycerol-3-phosphate acyltransferase (807 aa).

The HXXXXD motif signature appears at 308-313; it reads CHRSHM.

Belongs to the GPAT/DAPAT family.

It localises to the cell inner membrane. The enzyme catalyses sn-glycerol 3-phosphate + an acyl-CoA = a 1-acyl-sn-glycero-3-phosphate + CoA. It participates in phospholipid metabolism; CDP-diacylglycerol biosynthesis; CDP-diacylglycerol from sn-glycerol 3-phosphate: step 1/3. This chain is Glycerol-3-phosphate acyltransferase, found in Shewanella sp. (strain W3-18-1).